A 1016-amino-acid chain; its full sequence is Probably inactive leucine-rich repeat receptor-like protein kinase At3g28040 (1016 aa).

The N-terminal stretch at 1-26 is a signal peptide; the sequence is MGKQRRTMISFTLFLTLTMMSSLING. The Extracellular segment spans residues 27 to 646; it reads DTDSIQLNDD…FHRRMFLSVS (620 aa). 20 LRR repeats span residues 102–124, 125–147, 149–171, 174–196, 198–219, 224–245, 248–270, 272–295, 296–318, 320–342, 344–366, 368–390, 391–413, 416–438, 440–462, 464–486, 488–510, 512–535, 536–559, and 560–582; these read RLKV…SNNN, HLQK…LGSI, SLQH…LFNN, SLRY…LFRC, VLNS…VSGI, RLRA…GILS, NLKE…IGLC, HLNR…QKLK, SLNH…IGDM, GLVH…ISNL, SLKD…LESC, ELMI…FFDL, GLQE…SSRL, SLIR…VGLF, HMRY…IEFL, NLTV…ICES, SLQI…IGNC, SLKL…SNLQ, ELKI…GDLQ, and NLLL…DVFQ. N112, N135, and N171 each carry an N-linked (GlcNAc...) asparagine glycan. N-linked (GlcNAc...) asparagine glycosylation is present at N203. Residue N349 is glycosylated (N-linked (GlcNAc...) asparagine). Residues N445, N464, N509, and N522 are each glycosylated (N-linked (GlcNAc...) asparagine). N-linked (GlcNAc...) asparagine glycosylation occurs at N565. The chain crosses the membrane as a helical span at residues 647–667; the sequence is VIVAISAAILIFSGVIIITLL. The Cytoplasmic portion of the chain corresponds to 668 to 1016; sequence NASVRRRLAF…PVPHRIMDSF (349 aa). Residues 726-1013 form the Protein kinase domain; it reads LNKASRIGEG…INSPVPHRIM (288 aa). ATP contacts are provided by residues 732–740 and K755; that span reads IGEGVFGTV. A phosphotyrosine mark is found at Y841 and Y898.

Belongs to the protein kinase superfamily. Ser/Thr protein kinase family.

It is found in the membrane. The protein is Probably inactive leucine-rich repeat receptor-like protein kinase At3g28040 of Arabidopsis thaliana (Mouse-ear cress).